The sequence spans 187 residues: Probable chorismate pyruvate-lyase (187 aa).

3 residues coordinate substrate: Arg-77, Leu-115, and Glu-174.

Belongs to the UbiC family.

It localises to the cytoplasm. It carries out the reaction chorismate = 4-hydroxybenzoate + pyruvate. The protein operates within cofactor biosynthesis; ubiquinone biosynthesis. Removes the pyruvyl group from chorismate, with concomitant aromatization of the ring, to provide 4-hydroxybenzoate (4HB) for the ubiquinone pathway. The polypeptide is Probable chorismate pyruvate-lyase (Shewanella sp. (strain ANA-3)).